The following is a 394-amino-acid chain: MAKAKFERIKPHVNVGTIGHVDHGKTTLTAAISHVLAKTYGGEAKDFSQIDNAPEERERGITINTSHIEYDTPSRHYAHVDCPGHADYVKNMITGAAQMDGAILVVASTDGPMPQTREHILLSRQVGVPFIIVFMNKCDMVDDEELLELVEMEVRELLSEYDFPGDDLPVIQGSALKALEGEPEWEAKILELAAALDSYIPEPQRDIDKPFLLPIEDVFSISGRGTVVTGRVERGIVRVGDEVEIVGVRATTKTTCTGVEMFRKLLDEGRAGENCGILLRGTKRDDVERGQVLAKPGSINPHTTFESEVYVLSKEEGGRHTPFFKGYRPQFYFRTTDVTGTIELPEGVEMVMPGDNIKMVVTLICPIAMDEGLRFAIREGGRTVGAGVVAKIIA.

The region spanning 10–204 (KPHVNVGTIG…ALDSYIPEPQ (195 aa)) is the tr-type G domain. The tract at residues 19-26 (GHVDHGKT) is G1. A GTP-binding site is contributed by 19–26 (GHVDHGKT). A Mg(2+)-binding site is contributed by T26. The interval 60–64 (GITIN) is G2. The tract at residues 81–84 (DCPG) is G3. Residues 81 to 85 (DCPGH) and 136 to 139 (NKCD) contribute to the GTP site. The interval 136–139 (NKCD) is G4. The interval 174–176 (SAL) is G5.

This sequence belongs to the TRAFAC class translation factor GTPase superfamily. Classic translation factor GTPase family. EF-Tu/EF-1A subfamily. Monomer.

It is found in the cytoplasm. The catalysed reaction is GTP + H2O = GDP + phosphate + H(+). GTP hydrolase that promotes the GTP-dependent binding of aminoacyl-tRNA to the A-site of ribosomes during protein biosynthesis. The sequence is that of Elongation factor Tu from Shewanella putrefaciens (Pseudomonas putrefaciens).